The sequence spans 269 residues: Probable ribosomal RNA small subunit methyltransferase A (269 aa).

Positions 23, 25, 50, 71, 95, and 110 each coordinate S-adenosyl-L-methionine.

Belongs to the class I-like SAM-binding methyltransferase superfamily. rRNA adenine N(6)-methyltransferase family. RsmA subfamily.

It is found in the cytoplasm. Functionally, specifically dimethylates two adjacent adenosines in the loop of a conserved hairpin near the 3'-end of 16S rRNA in the 30S particle. May play a critical role in biogenesis of 30S subunits. This is Probable ribosomal RNA small subunit methyltransferase A from Pyrococcus abyssi (strain GE5 / Orsay).